The sequence spans 88 residues: Small ribosomal subunit protein uS15 (88 aa).

The protein belongs to the universal ribosomal protein uS15 family. As to quaternary structure, part of the 30S ribosomal subunit. Forms a bridge to the 50S subunit in the 70S ribosome, contacting the 23S rRNA.

One of the primary rRNA binding proteins, it binds directly to 16S rRNA where it helps nucleate assembly of the platform of the 30S subunit by binding and bridging several RNA helices of the 16S rRNA. Functionally, forms an intersubunit bridge (bridge B4) with the 23S rRNA of the 50S subunit in the ribosome. The protein is Small ribosomal subunit protein uS15 of Paracidovorax citrulli (strain AAC00-1) (Acidovorax citrulli).